A 112-amino-acid polypeptide reads, in one-letter code: Small ribosomal subunit protein bS6 (112 aa).

Belongs to the bacterial ribosomal protein bS6 family.

Its function is as follows. Binds together with bS18 to 16S ribosomal RNA. The protein is Small ribosomal subunit protein bS6 of Chlamydia caviae (strain ATCC VR-813 / DSM 19441 / 03DC25 / GPIC) (Chlamydophila caviae).